The sequence spans 78 residues: Acyl carrier protein (78 aa).

Positions Ser2–Ala77 constitute a Carrier domain. At Ser37 the chain carries O-(pantetheine 4'-phosphoryl)serine.

The protein belongs to the acyl carrier protein (ACP) family. 4'-phosphopantetheine is transferred from CoA to a specific serine of apo-ACP by AcpS. This modification is essential for activity because fatty acids are bound in thioester linkage to the sulfhydryl of the prosthetic group.

Its subcellular location is the cytoplasm. The protein operates within lipid metabolism; fatty acid biosynthesis. Carrier of the growing fatty acid chain in fatty acid biosynthesis. The polypeptide is Acyl carrier protein (Bacteroides fragilis (strain ATCC 25285 / DSM 2151 / CCUG 4856 / JCM 11019 / LMG 10263 / NCTC 9343 / Onslow / VPI 2553 / EN-2)).